The chain runs to 441 residues: MTQPSLSVLYSDHLRTLTARADQALQRGGFDHLVIPSGTTHYQLFDDRDYPFAVNPQFKAWVPLTRMPHSWLVYTPGKRPTVIFYQPFDYWHVVPDAPSGWWVEHCDIHIIRTPEAALPLLPARTERCAILGEAASALGACVPNNPAAVLDFLDYQRAFKTPYELAVMRLAQQLAVRGHRAAEAAFRAGQSEFGIHMAYCSAVGQDANELPYGNIIALNEHGAVLHYTELGRQAPQPLRSFLIDAGASAHGYASDITRTYAADAGSEFQALIDAVDAAQLRMGNAVRAGMDYKQLHVDAHLSLMGILHDFGIITVSPEAALATGVSAAFFPHGLGHLIGLQVHDVAGFAASDRGGRIERPDGHPYLRLTRVLEPGMVVTIEPGVYFIDMLLDEVKKNGHAASVNWDRVAQFAPYGGIRIEDEVVCTDGDPENLTRPVFAAP.

5 residues coordinate Mn(2+): Asp244, Asp255, His336, Glu381, and Glu420.

This sequence belongs to the peptidase M24B family. Bacterial-type prolidase subfamily. The cofactor is Mn(2+).

The catalysed reaction is Xaa-L-Pro dipeptide + H2O = an L-alpha-amino acid + L-proline. Its function is as follows. Splits dipeptides with a prolyl residue in the C-terminal position. The chain is Xaa-Pro dipeptidase from Xanthomonas campestris pv. campestris (strain 8004).